Here is a 208-residue protein sequence, read N- to C-terminus: Uracil phosphoribosyltransferase (208 aa).

5-phospho-alpha-D-ribose 1-diphosphate-binding positions include Arg-78, Arg-103, and 130–138 (DPMLATGGS). Residues Ile-193 and 198–200 (GDA) each bind uracil. Position 199 (Asp-199) interacts with 5-phospho-alpha-D-ribose 1-diphosphate.

This sequence belongs to the UPRTase family. Requires Mg(2+) as cofactor.

It carries out the reaction UMP + diphosphate = 5-phospho-alpha-D-ribose 1-diphosphate + uracil. It functions in the pathway pyrimidine metabolism; UMP biosynthesis via salvage pathway; UMP from uracil: step 1/1. Its activity is regulated as follows. Allosterically activated by GTP. Functionally, catalyzes the conversion of uracil and 5-phospho-alpha-D-ribose 1-diphosphate (PRPP) to UMP and diphosphate. In Neisseria gonorrhoeae (strain ATCC 700825 / FA 1090), this protein is Uracil phosphoribosyltransferase.